The chain runs to 273 residues: MPELPEVETVRRELEKRIVGQKIISIEATYPRMVLTGFEQLKKELTGKTIQGISRRGKYLIFEIGDDFRLISHLRMEGKYRLATLDAPREKHDHLTMKFADGQLIYADVRKFGTWELISTDQVLPYFLKKKIGPEPTYDEDFDEKLFREKLRKSTKKIKPYLLEQTLVAGLGNIYVDEVLWLAKIHPEKETNQLIESSIHLLHDSIIEILQKAIKLGGSSIRTYSALGSTGKMQNELQVYGKTGEKCSRCGAEIQKIKVAGRGTHFCPVCQQK.

The Schiff-base intermediate with DNA role is filled by Pro-2. Glu-3 acts as the Proton donor in catalysis. Catalysis depends on Lys-58, which acts as the Proton donor; for beta-elimination activity. The interval 58–76 is DNA-binding; that stretch reads KYLIFEIGDDFRLISHLRM. The DNA site is built by His-92 and Arg-110. The tract at residues 162 to 172 is DNA-binding; that stretch reads LLEQTLVAGLG. The FPG-type zinc finger occupies 238–272; it reads QVYGKTGEKCSRCGAEIQKIKVAGRGTHFCPVCQQ. Residue Arg-262 is the Proton donor; for delta-elimination activity of the active site.

This sequence belongs to the FPG family. As to quaternary structure, monomer. The cofactor is Zn(2+).

It catalyses the reaction Hydrolysis of DNA containing ring-opened 7-methylguanine residues, releasing 2,6-diamino-4-hydroxy-5-(N-methyl)formamidopyrimidine.. It carries out the reaction 2'-deoxyribonucleotide-(2'-deoxyribose 5'-phosphate)-2'-deoxyribonucleotide-DNA = a 3'-end 2'-deoxyribonucleotide-(2,3-dehydro-2,3-deoxyribose 5'-phosphate)-DNA + a 5'-end 5'-phospho-2'-deoxyribonucleoside-DNA + H(+). Involved in base excision repair of DNA damaged by oxidation or by mutagenic agents. Acts as a DNA glycosylase that recognizes and removes damaged bases. Has a preference for oxidized purines, such as 7,8-dihydro-8-oxoguanine (8-oxoG). Has AP (apurinic/apyrimidinic) lyase activity and introduces nicks in the DNA strand. Cleaves the DNA backbone by beta-delta elimination to generate a single-strand break at the site of the removed base with both 3'- and 5'-phosphates. This Lactococcus lactis subsp. cremoris (Streptococcus cremoris) protein is Formamidopyrimidine-DNA glycosylase (mutM).